The chain runs to 310 residues: Methionyl-tRNA formyltransferase (310 aa).

108 to 111 (SLLP) contacts (6S)-5,6,7,8-tetrahydrofolate.

Belongs to the Fmt family.

It catalyses the reaction L-methionyl-tRNA(fMet) + (6R)-10-formyltetrahydrofolate = N-formyl-L-methionyl-tRNA(fMet) + (6S)-5,6,7,8-tetrahydrofolate + H(+). In terms of biological role, attaches a formyl group to the free amino group of methionyl-tRNA(fMet). The formyl group appears to play a dual role in the initiator identity of N-formylmethionyl-tRNA by promoting its recognition by IF2 and preventing the misappropriation of this tRNA by the elongation apparatus. The protein is Methionyl-tRNA formyltransferase of Fusobacterium nucleatum subsp. nucleatum (strain ATCC 25586 / DSM 15643 / BCRC 10681 / CIP 101130 / JCM 8532 / KCTC 2640 / LMG 13131 / VPI 4355).